Consider the following 537-residue polypeptide: Exodeoxyribonuclease 7 large subunit (537 aa).

The segment at 508–537 (GEGAPVEPPQAARPSKGARTKAAQPSLFDD) is disordered.

This sequence belongs to the XseA family. Heterooligomer composed of large and small subunits.

Its subcellular location is the cytoplasm. It catalyses the reaction Exonucleolytic cleavage in either 5'- to 3'- or 3'- to 5'-direction to yield nucleoside 5'-phosphates.. Its function is as follows. Bidirectionally degrades single-stranded DNA into large acid-insoluble oligonucleotides, which are then degraded further into small acid-soluble oligonucleotides. The chain is Exodeoxyribonuclease 7 large subunit from Azorhizobium caulinodans (strain ATCC 43989 / DSM 5975 / JCM 20966 / LMG 6465 / NBRC 14845 / NCIMB 13405 / ORS 571).